The chain runs to 293 residues: ELMO domain-containing protein 2 (293 aa).

The ELMO domain maps to 126 to 282 (QHEKLLIKLW…KFHEKIKGLL (157 aa)).

Functionally, acts as a GTPase-activating protein (GAP) toward guanine nucleotide exchange factors like ARL2, ARL3, ARF1 and ARF6, but not for GTPases outside the Arf family. This is ELMO domain-containing protein 2 (ELMOD2) from Bos taurus (Bovine).